Consider the following 152-residue polypeptide: Calcium-binding protein SPEC 1A (152 aa).

EF-hand domains are found at residues 10 to 45, 46 to 81, 84 to 119, and 120 to 152; these read EEVTEFKRRFKNKDTDKSKSITAEELGEFFKSTGKS, YTDKQIDKMISDVDTDESGTIDFSEMLMGIAEQMVK, WKEEHYTKAFDDMDKDGNGSLSPQELREALSASKPP, and MKRKKIKAIIQKADANKDGKIDREEFMKLIKSC. Ca(2+)-binding residues include Asp-23, Asp-25, Ser-27, Ser-29, Glu-34, Asp-59, Asp-61, Ser-63, Thr-65, Glu-70, Asp-97, Asp-99, Asn-101, Ser-103, Glu-108, Asp-133, Asn-135, Asp-137, Lys-139, and Glu-144. The tract at residues 95-121 is disordered; the sequence is DMDKDGNGSLSPQELREALSASKPPMK.

In terms of tissue distribution, found in cell lineages giving rise to the aboral ectoderm, a squamous epithelium covering the surface of the late stage embryo and larva.

Calcium-binding protein involved in larval development and metamorphosis. Likely to function as calcium buffers mediating the transport of calcium from the sea water to the blastocoel where calcium is required for skeleton formation. This chain is Calcium-binding protein SPEC 1A (SPEC1), found in Strongylocentrotus purpuratus (Purple sea urchin).